A 313-amino-acid polypeptide reads, in one-letter code: MEFKHTSVLLDECIEYLNINQEGIYVDGTIGGAGHSSEIYKRLGEKGCLVGLDQDSFAVETSIKRLDEIKSNADFKVVNTNFKNIKSACSGLGINEVDGILLDLGVSSHQLDEASRGFSYQHDAPLDMRMNTKSELSAYDVVNKYSEQDIYRIIRDFGEEKWASRIAKFITEARQNEPVETTYDLVDIIKKAVPSSARRDGPHPAKRTFQAIRIEVNNELGILNKTIEDCVDLLKRGGRLCIITFHSLEDRIVKMQYNKMVNPCTCPPAFPVCACGKKPKAVLINKKPIVSDIRELDKNPRARSAKLRVLQKI.

S-adenosyl-L-methionine contacts are provided by residues 33 to 35, aspartate 53, phenylalanine 82, aspartate 103, and glutamine 110; that span reads AGH.

Belongs to the methyltransferase superfamily. RsmH family.

It is found in the cytoplasm. It catalyses the reaction cytidine(1402) in 16S rRNA + S-adenosyl-L-methionine = N(4)-methylcytidine(1402) in 16S rRNA + S-adenosyl-L-homocysteine + H(+). Functionally, specifically methylates the N4 position of cytidine in position 1402 (C1402) of 16S rRNA. In Ruminiclostridium cellulolyticum (strain ATCC 35319 / DSM 5812 / JCM 6584 / H10) (Clostridium cellulolyticum), this protein is Ribosomal RNA small subunit methyltransferase H.